Reading from the N-terminus, the 267-residue chain is Acetylglutamate kinase (267 aa).

Substrate is bound by residues 53–54 (GG), R75, and N167.

Belongs to the acetylglutamate kinase family. ArgB subfamily.

It is found in the cytoplasm. The enzyme catalyses N-acetyl-L-glutamate + ATP = N-acetyl-L-glutamyl 5-phosphate + ADP. Its pathway is amino-acid biosynthesis; L-arginine biosynthesis; N(2)-acetyl-L-ornithine from L-glutamate: step 2/4. In terms of biological role, catalyzes the ATP-dependent phosphorylation of N-acetyl-L-glutamate. This Shewanella pealeana (strain ATCC 700345 / ANG-SQ1) protein is Acetylglutamate kinase.